We begin with the raw amino-acid sequence, 141 residues long: Hemoglobin subunit alpha-D (141 aa).

The region spanning 1 to 141 (MLTADDKKLL…VAAVLAEKYR (141 aa)) is the Globin domain. Heme b contacts are provided by His-58 and His-87.

It belongs to the globin family. As to quaternary structure, heterotetramer of two alpha-D chains and two beta chains. In terms of tissue distribution, red blood cells.

Functionally, involved in oxygen transport from the lung to the various peripheral tissues. This Anser anser anser (Western greylag goose) protein is Hemoglobin subunit alpha-D (HBAD).